Consider the following 127-residue polypeptide: Methylglyoxal synthase (127 aa).

The 127-residue stretch at 1-127 folds into the MGS-like domain; sequence MEKKIALIAH…IKGLESLILR (127 aa). Residues histidine 10, lysine 14, 36–39, and 56–57 each bind substrate; these read TGTT and SG. Aspartate 62 functions as the Proton donor/acceptor in the catalytic mechanism. Histidine 89 is a substrate binding site.

The protein belongs to the methylglyoxal synthase family.

It catalyses the reaction dihydroxyacetone phosphate = methylglyoxal + phosphate. Functionally, catalyzes the formation of methylglyoxal from dihydroxyacetone phosphate. The sequence is that of Methylglyoxal synthase from Borreliella afzelii (strain PKo) (Borrelia afzelii).